Here is a 425-residue protein sequence, read N- to C-terminus: Synaptotagmin-4 (425 aa).

Over 1-16 (MAPITTSREEFDEIPT) the chain is Vesicular. A helical membrane pass occupies residues 17 to 37 (VVGIFSAFGLVFTVSLFAWIC). Residues 38–425 (CQRKSSKSNK…IAKWHVLCDG (388 aa)) are Cytoplasmic-facing. The segment covering 73–83 (FGADDKNEVKN) has biased composition (basic and acidic residues). Disordered regions lie at residues 73-93 (FGAD…NSLH) and 127-147 (LEGE…SLTS). Phosphoserine; by MAPK8 is present on serine 135. Over residues 135-146 (SPESLKSSTSLT) the composition is skewed to low complexity. C2 domains are found at residues 153–274 (KLGT…MLMN) and 287–420 (GRGE…AKWH). Residues aspartate 246, serine 249, and aspartate 252 each contribute to the Ca(2+) site.

Belongs to the synaptotagmin family. In terms of assembly, interacts with KIF1A; the interaction increases in presence of calcium and decreases when SYT4 is phosphorylated at Ser-135. Ca(2+) is required as a cofactor. Post-translationally, phosphorylation at Ser-135 by MAPK8/JNK1 reduces interaction with KIF1A and neuronal dense core vesicles mobility. As to expression, expressed in melanocytes. Expressed in brain. Within brain, expression is highest in hippocampus, with substantial levels also detected in amygdala and thalamus.

The protein resides in the cytoplasmic vesicle. It is found in the secretory vesicle. The protein localises to the neuronal dense core vesicle membrane. In terms of biological role, synaptotagmin family member which does not bind Ca(2+). Involved in neuronal dense core vesicles (DCVs) mobility through its interaction with KIF1A. Upon increased neuronal activity, phosphorylation by MAPK8/JNK1 destabilizes the interaction with KIF1A and captures DCVs to synapses. Plays a role in dendrite formation by melanocytes. In Homo sapiens (Human), this protein is Synaptotagmin-4 (SYT4).